The chain runs to 670 residues: DNA ligase (670 aa).

Residues 36 to 40, 85 to 86, and glutamate 116 each bind NAD(+); these read DAQYD and SL. Lysine 118 serves as the catalytic N6-AMP-lysine intermediate. NAD(+)-binding residues include arginine 139, glutamate 174, lysine 290, and lysine 314. Zn(2+) contacts are provided by cysteine 408, cysteine 411, cysteine 426, and cysteine 431. The 80-residue stretch at 591–670 folds into the BRCT domain; the sequence is STDQTLSGKT…QDFVKLLQQQ (80 aa).

This sequence belongs to the NAD-dependent DNA ligase family. LigA subfamily. Mg(2+) serves as cofactor. It depends on Mn(2+) as a cofactor.

It carries out the reaction NAD(+) + (deoxyribonucleotide)n-3'-hydroxyl + 5'-phospho-(deoxyribonucleotide)m = (deoxyribonucleotide)n+m + AMP + beta-nicotinamide D-nucleotide.. In terms of biological role, DNA ligase that catalyzes the formation of phosphodiester linkages between 5'-phosphoryl and 3'-hydroxyl groups in double-stranded DNA using NAD as a coenzyme and as the energy source for the reaction. It is essential for DNA replication and repair of damaged DNA. The sequence is that of DNA ligase from Desulforamulus reducens (strain ATCC BAA-1160 / DSM 100696 / MI-1) (Desulfotomaculum reducens).